A 320-amino-acid polypeptide reads, in one-letter code: uncharacterized protein (320 aa).

The segment at Val196–Lys273 is disordered. Positions Tyr200 to Asn210 are enriched in acidic residues. Basic and acidic residues predominate over residues Ser211–Pro226. Positions Gln248 to Lys273 are enriched in polar residues.

This is an uncharacterized protein from Acanthamoeba polyphaga mimivirus (APMV).